Consider the following 755-residue polypeptide: Dynamin-1-like protein (755 aa).

At methionine 1 the chain carries N-acetylmethionine. The region spanning 22–315 (IIQLPQIVVV…LMHHIRDCLP (294 aa)) is the Dynamin-type G domain. A G1 motif region spans residues 32–39 (GTQSSGKS). A GTP-binding site is contributed by 32-40 (GTQSSGKSS). The tract at residues 58-60 (VTR) is G2 motif. Residues 159–162 (DLPG) are G3 motif. Positions 228-231 (TKLD) are G4 motif. Residues 228 to 234 (TKLDLMD) and 259 to 262 (NRSQ) each bind GTP. The G5 motif stretch occupies residues 258 to 261 (VNRS). The segment at 357–502 (YCNTIEGTAK…NEMVHNLVAI (146 aa)) is middle domain. Residues 461–704 (NYSTQELLRF…NHVKDTLQSE (244 aa)) form an interaction with GSK3B region. Residues 515-582 (ADACGLMNNN…IQDNRRETKN (68 aa)) are b domain. Residues 536 to 610 (ELPSAVSRDK…QEPTTGNWRG (75 aa)) form a disordered region. Serine 542 carries the phosphoserine modification. Residues lysine 545 and lysine 548 each participate in a glycyl lysine isopeptide (Lys-Gly) (interchain with G-Cter in SUMO) cross-link. The segment covering 550-567 (PSALAPASQEPSPAASAE) has biased composition (low complexity). Serine 561 is subject to Phosphoserine. Residues 568–581 (ADGKLIQDNRRETK) are compositionally biased toward basic and acidic residues. Glycyl lysine isopeptide (Lys-Gly) (interchain with G-Cter in SUMO) cross-links involve residues lysine 571 and lysine 581. Gly residues predominate over residues 586–600 (AGGGIGDGGRIGDGG). Threonine 604 and threonine 605 each carry an O-linked (GlcNAc) threonine glycan. A Glycyl lysine isopeptide (Lys-Gly) (interchain with G-Cter in SUMO) cross-link involves residue lysine 613. Lysine 616 carries the post-translational modification N6-acetyllysine; alternate. A Glycyl lysine isopeptide (Lys-Gly) (interchain with G-Cter in SUMO); alternate cross-link involves residue lysine 616. Residue lysine 625 forms a Glycyl lysine isopeptide (Lys-Gly) (interchain with G-Cter in SUMO) linkage. Phosphoserine is present on serine 626. A Glycyl lysine isopeptide (Lys-Gly) (interchain with G-Cter in SUMO) cross-link involves residue lysine 627. Serine 635 is subject to Phosphoserine; by CDK1. Serine 656 is modified (phosphoserine; by CAMK1 and PKA). At cysteine 663 the chain carries S-nitrosocysteine. The GED domain maps to 663–754 (CEVIERLIKS…IIAEIRETHL (92 aa)). An important for homodimerization region spans residues 673 to 687 (YFLIVRKNIQDSVPK).

It belongs to the TRAFAC class dynamin-like GTPase superfamily. Dynamin/Fzo/YdjA family. Homotetramer; dimerizes through the N-terminal GTP-middle region of one molecule binding to the GED domain of another DNM1L molecule. Oligomerizes in a GTP-dependent manner to form membrane-associated tubules with a spiral pattern. Interacts with GSK3B and MARCHF5. Interacts (via the GTPase and B domains) with UBE2I; the interaction promotes sumoylation of DNM1L, mainly in its B domain. Interacts with PPP3CA; the interaction dephosphorylates DNM1L and regulates its transition to mitochondria. Interacts with BCL2L1 isoform BCL-X(L) and CLTA; DNM1L and BCL2L1 isoform BCL-X(L) may form a complex in synaptic vesicles that also contains clathrin and MFF. Interacts with MFF; the interaction is inhinited by C11orf65/MFI. Interacts with FIS1. Interacts with MIEF2 and MIEF1; GTP-dependent this regulates GTP hydrolysis and DNM1L oligomerization. Interacts with PGAM5; this interaction leads to dephosphorylation at Ser-656 and activation of GTPase activity and eventually to mitochondria fragmentation. Interacts with RALBP1; during mitosis, recruits DNM1L to the mitochondrion and mediates its activation by the mitotic kinase cyclin B-CDK1. Interacts with FUNDC1; this interaction recruits DNM1L/DRP1 at ER-mitochondria contact sites. Phosphorylation/dephosphorylation events on two sites near the GED domain regulate mitochondrial fission. Phosphorylation on Ser-656 by CAMK1 and PKA inhibits the GTPase activity, leading to a defect in mitochondrial fission promoting mitochondrial elongation. Dephosphorylated on this site by PPP3CA which promotes mitochondrial fission. Phosphorylation on Ser-635 by PINK1 activates the GTPase activity and promotes mitochondrial fission. Phosphorylation on Ser-635 by CDK1 also promotes mitochondrial fission. Phosphorylated in a circadian manner at Ser-656. Dephosphorylated by PGAM5. In terms of processing, sumoylated on various lysine residues within the B domain, probably by MUL1. Sumoylation positively regulates mitochondrial fission. Desumoylated by SENP5 during G2/M transition of mitosis. Appears to be linked to its catalytic activity. Post-translationally, S-nitrosylation increases DNM1L dimerization, mitochondrial fission and causes neuronal damage. O-GlcNAcylation augments the level of the GTP-bound active form of DNM1L and induces translocation from the cytoplasm to mitochondria in cardiomyocytes. It also decreases phosphorylation at Ser-656. In terms of processing, ubiquitination by MARCHF5 affects mitochondrial morphology. As to expression, expressed in all tissues tested (at protein level). Longer isoforms are preferentially expressed in brain.

The protein resides in the cytoplasm. The protein localises to the cytosol. Its subcellular location is the golgi apparatus. It is found in the endomembrane system. It localises to the mitochondrion outer membrane. The protein resides in the peroxisome. The protein localises to the membrane. Its subcellular location is the clathrin-coated pit. It is found in the cytoplasmic vesicle. It localises to the secretory vesicle. The protein resides in the synaptic vesicle membrane. It catalyses the reaction GTP + H2O = GDP + phosphate + H(+). In terms of biological role, functions in mitochondrial and peroxisomal division. Mediates membrane fission through oligomerization into membrane-associated tubular structures that wrap around the scission site to constrict and sever the mitochondrial membrane through a GTP hydrolysis-dependent mechanism. The specific recruitment at scission sites is mediated by membrane receptors like MFF, MIEF1 and MIEF2 for mitochondrial membranes. While the recruitment by the membrane receptors is GTP-dependent, the following hydrolysis of GTP induces the dissociation from the receptors and allows DNM1L filaments to curl into closed rings that are probably sufficient to sever a double membrane. Acts downstream of PINK1 to promote mitochondrial fission in a PRKN-dependent manner. Plays an important role in mitochondrial fission during mitosis. Through its function in mitochondrial division, ensures the survival of at least some types of postmitotic neurons, including Purkinje cells, by suppressing oxidative damage. Required for normal brain development, including that of cerebellum. Facilitates developmentally regulated apoptosis during neural tube formation. Required for a normal rate of cytochrome c release and caspase activation during apoptosis; this requirement may depend upon the cell type and the physiological apoptotic cues. Required for formation of endocytic vesicles. Proposed to regulate synaptic vesicle membrane dynamics through association with BCL2L1 isoform Bcl-X(L) which stimulates its GTPase activity in synaptic vesicles; the function may require its recruitment by MFF to clathrin-containing vesicles. Required for programmed necrosis execution. Rhythmic control of its activity following phosphorylation at Ser-656 is essential for the circadian control of mitochondrial ATP production. The protein is Dynamin-1-like protein of Rattus norvegicus (Rat).